We begin with the raw amino-acid sequence, 284 residues long: Protein phosphatase 1 regulatory subunit 3B (284 aa).

The short motif at 61-64 is the PP1-binding motif element; it reads RVSF. One can recognise a CBM21 domain in the interval 124–232; that stretch reads RNRLQTNHVC…SNKGKNYRIT (109 aa). Ser-260 is modified (phosphoserine).

Interacts with glycogen, PPP1CC catalytic subunit of PP1 and PYGL. Associates with glycogen particles. Forms complexes with debranching enzyme, glycogen phosphorylase, glycogen synthase and phosphorylase kinase which is necessary for its regulation of PP1 activity. As to expression, highly expressed in liver (at protein level). Expressed predominantly in liver. Expressed moderately in heart. Expressed weakly in prostate, stomach, thyroid, lung, kidney, spleen and skeletal muscle.

Its function is as follows. Acts as a glycogen-targeting subunit for phosphatase PP1. Facilitates interaction of the PP1 with enzymes of the glycogen metabolism and regulates its activity. Suppresses the rate at which PP1 dephosphorylates (inactivates) glycogen phosphorylase and enhances the rate at which it activates glycogen synthase and therefore limits glycogen breakdown. Its activity is inhibited by PYGL, resulting in inhibition of the glycogen synthase and glycogen phosphorylase phosphatase activities of PP1. Dramatically increases basal and insulin-stimulated glycogen synthesis upon overexpression in hepatocytes. The sequence is that of Protein phosphatase 1 regulatory subunit 3B (Ppp1r3b) from Mus musculus (Mouse).